Reading from the N-terminus, the 249-residue chain is ATP synthase subunit a (249 aa).

Helical transmembrane passes span 26 to 46, 84 to 104, 114 to 134, 143 to 163, 185 to 205, and 208 to 228; these read FTNV…FLYL, FFPF…IGLF, IIVT…YGFF, LFVP…IEII, ITLK…ALGI, and AVLP…VAFL.

This sequence belongs to the ATPase A chain family. F-type ATPases have 2 components, CF(1) - the catalytic core - and CF(0) - the membrane proton channel. CF(1) has five subunits: alpha(3), beta(3), gamma(1), delta(1), epsilon(1). CF(0) has three main subunits: a(1), b(2) and c(9-12). The alpha and beta chains form an alternating ring which encloses part of the gamma chain. CF(1) is attached to CF(0) by a central stalk formed by the gamma and epsilon chains, while a peripheral stalk is formed by the delta and b chains.

It is found in the cell inner membrane. Functionally, key component of the proton channel; it plays a direct role in the translocation of protons across the membrane. The protein is ATP synthase subunit a of Brucella canis (strain ATCC 23365 / NCTC 10854 / RM-666).